Reading from the N-terminus, the 521-residue chain is Lysine--tRNA ligase (521 aa).

The 'HIGH' region signature appears at proline 32–asparagine 40. A 'KMSKS' region motif is present at residues lysine 280–serine 284.

It belongs to the class-I aminoacyl-tRNA synthetase family.

The protein resides in the cytoplasm. The enzyme catalyses tRNA(Lys) + L-lysine + ATP = L-lysyl-tRNA(Lys) + AMP + diphosphate. In Borrelia garinii subsp. bavariensis (strain ATCC BAA-2496 / DSM 23469 / PBi) (Borreliella bavariensis), this protein is Lysine--tRNA ligase.